The primary structure comprises 121 residues: Large ribosomal subunit protein bL12 (121 aa).

This sequence belongs to the bacterial ribosomal protein bL12 family. In terms of assembly, homodimer. Part of the ribosomal stalk of the 50S ribosomal subunit. Forms a multimeric L10(L12)X complex, where L10 forms an elongated spine to which 2 to 4 L12 dimers bind in a sequential fashion. Binds GTP-bound translation factors.

Functionally, forms part of the ribosomal stalk which helps the ribosome interact with GTP-bound translation factors. Is thus essential for accurate translation. The polypeptide is Large ribosomal subunit protein bL12 (Baumannia cicadellinicola subsp. Homalodisca coagulata).